A 404-amino-acid polypeptide reads, in one-letter code: tRNA N6-adenosine threonylcarbamoyltransferase, mitochondrial (404 aa).

Residues 1–27 (MFQSCLPGALRSWSRGVFSTSTRPRLV) constitute a mitochondrion transit peptide. The a divalent metal cation site is built by His135 and His139. Residues 157–161 (LVSGG), Asp190, Gly210, Glu214, 317–318 (SN), and Thr345 each bind substrate. Position 346 (Asp346) interacts with a divalent metal cation.

Belongs to the KAE1 / TsaD family. Monomer. It depends on a divalent metal cation as a cofactor.

It is found in the mitochondrion. The catalysed reaction is L-threonylcarbamoyladenylate + adenosine(37) in tRNA = N(6)-L-threonylcarbamoyladenosine(37) in tRNA + AMP + H(+). Required for the formation of a threonylcarbamoyl group on adenosine at position 37 (t(6)A37) in mitochondrial tRNAs that read codons beginning with adenine. Probably involved in the transfer of the threonylcarbamoyl moiety of threonylcarbamoyl-AMP (TC-AMP) to the N6 group of A37. Involved in mitochondrial genome maintenance. The sequence is that of tRNA N6-adenosine threonylcarbamoyltransferase, mitochondrial from Danio rerio (Zebrafish).